A 273-amino-acid polypeptide reads, in one-letter code: MHDANIRVAIAGAGGRMGRQLIQAALALEGVQLGAALEREGSSLLGSDAGELAGAGKTGVTVQSSLDAVKDDFDVFIDFTRPEGTLNHLAFCRQHGKGMVIGTTGFDEAGKQAIRDAAADIAIVFAANFSVGVNVMLKLLEKAAKVMGDYTDIEIIEAHHRHKVDAPSGTALAMGEAIAHALDKDLKDCAVYSRESHTGERVPGTIGFATVRAGDIVGEHTAMFADIGERLEITHKASSRMTFANGAVRSAFWLSGKESGLFDMRDVLDLNSL.

NAD(+) is bound by residues 12–17 and E38; that span reads GAGGRM. R39 provides a ligand contact to NADP(+). NAD(+) is bound by residues 102-104 and 126-129; these read GTT and AANF. The Proton donor/acceptor role is filled by H159. H160 contributes to the (S)-2,3,4,5-tetrahydrodipicolinate binding site. The Proton donor role is filled by K163. 169–170 provides a ligand contact to (S)-2,3,4,5-tetrahydrodipicolinate; the sequence is GT.

It belongs to the DapB family. In terms of assembly, homotetramer.

The protein localises to the cytoplasm. The catalysed reaction is (S)-2,3,4,5-tetrahydrodipicolinate + NAD(+) + H2O = (2S,4S)-4-hydroxy-2,3,4,5-tetrahydrodipicolinate + NADH + H(+). It carries out the reaction (S)-2,3,4,5-tetrahydrodipicolinate + NADP(+) + H2O = (2S,4S)-4-hydroxy-2,3,4,5-tetrahydrodipicolinate + NADPH + H(+). It functions in the pathway amino-acid biosynthesis; L-lysine biosynthesis via DAP pathway; (S)-tetrahydrodipicolinate from L-aspartate: step 4/4. Its function is as follows. Catalyzes the conversion of 4-hydroxy-tetrahydrodipicolinate (HTPA) to tetrahydrodipicolinate. This Shigella boydii serotype 18 (strain CDC 3083-94 / BS512) protein is 4-hydroxy-tetrahydrodipicolinate reductase.